A 395-amino-acid polypeptide reads, in one-letter code: Cystathionine beta-lyase MetC (395 aa).

Residue Lys210 is modified to N6-(pyridoxal phosphate)lysine.

Belongs to the trans-sulfuration enzymes family. In terms of assembly, homotetramer; dimer of dimers. Pyridoxal 5'-phosphate is required as a cofactor.

Its subcellular location is the cytoplasm. It catalyses the reaction L,L-cystathionine + H2O = L-homocysteine + pyruvate + NH4(+). The enzyme catalyses L-cysteine + H2O = hydrogen sulfide + pyruvate + NH4(+) + H(+). The catalysed reaction is an S-substituted L-cysteine + H2O = a thiol + pyruvate + NH4(+). It participates in amino-acid biosynthesis; L-methionine biosynthesis via de novo pathway; L-homocysteine from L-cystathionine: step 1/1. Its activity is regulated as follows. L-cysteine inhibits cystathionine beta-lyase activity competitively. Inhibited by aminoethoxyvinylglycine (AVG). Its function is as follows. Primarily catalyzes the cleavage of cystathionine to homocysteine, pyruvate and ammonia during methionine biosynthesis. Also exhibits cysteine desulfhydrase activity, producing sulfide from cysteine. In addition, under certain growth conditions, exhibits significant alanine racemase coactivity. This is Cystathionine beta-lyase MetC from Escherichia coli (strain K12).